A 397-amino-acid chain; its full sequence is Cathepsin E (397 aa).

The first 20 residues, 1 to 20, serve as a signal peptide directing secretion; it reads MKPLLVLLLLLLLDLAQAQG. Residues 21 to 59 constitute a propeptide, activation peptide; sequence ALHRVPLRRHQSLRKKLRAQGQLSEFWRSHNLDMTRLSE. The 315-residue stretch at 79-393 folds into the Peptidase A1 domain; that stretch reads YFGTISIGTP…DRGNNQVGLA (315 aa). N-linked (GlcNAc...) asparagine glycosylation occurs at Asn91. The active site involves Asp97. 2 cysteine pairs are disulfide-bonded: Cys110/Cys115 and Cys273/Cys277. Asp282 is an active-site residue. Asn323 is a glycosylation site (N-linked (GlcNAc...) asparagine).

This sequence belongs to the peptidase A1 family. As to quaternary structure, homodimer; disulfide-linked. Glycosylated. The nature of the carbohydrate chain varies between cell types. In fibroblasts, the proenzyme contains a high mannose-type oligosaccharide, while the mature enzyme contains a complex-type oligosaccharide. As to expression, expressed abundantly in the stomach, club cells and alveolar macrophages of the lung, brain microglia, spleen and activated B-lymphocytes. Not expressed in resting B-lymphocytes.

The protein localises to the endosome. The catalysed reaction is Similar to cathepsin D, but slightly broader specificity.. In terms of biological role, may have a role in immune function. Probably involved in the processing of antigenic peptides during MHC class II-mediated antigen presentation. May play a role in activation-induced lymphocyte depletion in the thymus, and in neuronal degeneration and glial cell activation in the brain. The protein is Cathepsin E (Ctse) of Mus musculus (Mouse).